Here is a 503-residue protein sequence, read N- to C-terminus: Carboxyl-terminal PDZ ligand of neuronal nitric oxide synthase protein (503 aa).

The PID domain maps to 26 to 191 (FQHGISFEAK…ESERNSDGSG (166 aa)). The segment at 170-212 (HTQQNADGQEDGESERNSDGSGDPGRQLTGAERVSTAAAEETD) is disordered. A phosphoserine mark is found at Ser183, Ser187, Ser190, and Ser262. A coiled-coil region spans residues 318 to 359 (AAEAAARLEAQARVHQLLLQNKDMLQHISLLVKQVQELELKL). Phosphoserine is present on residues Ser367, Ser370, Ser397, and Ser413. Residues 491-503 (QELGDSLDDEIAV) are interaction with NOS1. The PDZ-binding motif lies at 501-503 (IAV).

In terms of assembly, interacts with the PDZ domain of NOS1 or the second PDZ domain of DLG4 through its C-terminus. Interacts with RASD1 and SYN1, SYN2 and SYN3 via its PID domain. Forms a ternary complex with NOS1 and SYN1. Forms a ternary complex with NOS1 and RASD1.

The protein resides in the cell projection. Its subcellular location is the filopodium. It is found in the podosome. In terms of biological role, adapter protein involved in neuronal nitric-oxide (NO) synthesis regulation via its association with nNOS/NOS1. The complex formed with NOS1 and synapsins is necessary for specific NO and synapsin functions at a presynaptic level. Mediates an indirect interaction between NOS1 and RASD1 leading to enhance the ability of NOS1 to activate RASD1. Competes with DLG4 for interaction with NOS1, possibly affecting NOS1 activity by regulating the interaction between NOS1 and DLG4. In kidney podocytes, plays a role in podosomes and filopodia formation through CDC42 activation. The chain is Carboxyl-terminal PDZ ligand of neuronal nitric oxide synthase protein from Mus musculus (Mouse).